A 344-amino-acid polypeptide reads, in one-letter code: 3-isopropylmalate dehydrogenase (344 aa).

The substrate site is built by arginine 93, arginine 103, arginine 131, and aspartate 215. 3 residues coordinate Mg(2+): aspartate 215, aspartate 239, and aspartate 243. Residue 273 to 285 (GSAPDIAGKGIAN) coordinates NAD(+).

It belongs to the isocitrate and isopropylmalate dehydrogenases family. LeuB type 1 subfamily. As to quaternary structure, homodimer. Mg(2+) is required as a cofactor. Requires Mn(2+) as cofactor.

It is found in the cytoplasm. It carries out the reaction (2R,3S)-3-isopropylmalate + NAD(+) = 4-methyl-2-oxopentanoate + CO2 + NADH. The protein operates within amino-acid biosynthesis; L-leucine biosynthesis; L-leucine from 3-methyl-2-oxobutanoate: step 3/4. In terms of biological role, catalyzes the oxidation of 3-carboxy-2-hydroxy-4-methylpentanoate (3-isopropylmalate) to 3-carboxy-4-methyl-2-oxopentanoate. The product decarboxylates to 4-methyl-2 oxopentanoate. This Streptococcus mutans serotype c (strain ATCC 700610 / UA159) protein is 3-isopropylmalate dehydrogenase.